The sequence spans 132 residues: MADTMQFDLVSPERRLASVAASEVRLPGVEGDLTAMPGHAPVILSLRPGILTVVSAAGTAEYAVTGGFAEVSGEKVTVLAERGLTRAELTAAVHAEMLAEAKKVADAAHPSVADAAAKMLADMEALGSHINL.

This sequence belongs to the ATPase epsilon chain family. F-type ATPases have 2 components, CF(1) - the catalytic core - and CF(0) - the membrane proton channel. CF(1) has five subunits: alpha(3), beta(3), gamma(1), delta(1), epsilon(1). CF(0) has four main subunits: a, b, b' and c.

It is found in the cellular chromatophore membrane. Produces ATP from ADP in the presence of a proton gradient across the membrane. This chain is ATP synthase epsilon chain (atpC), found in Rhodobacter capsulatus (Rhodopseudomonas capsulata).